Reading from the N-terminus, the 883-residue chain is Putative pentatricopeptide repeat-containing protein At1g13800 (883 aa).

PPR repeat units lie at residues 145-180 (LIRV…GRAP), 181-215 (DIKA…GLDA), 216-251 (DAHT…TRNP), 253-285 (VFYL…NILV), 290-324 (LGIA…GIDP), 325-359 (DVYV…RKRI), 360-394 (NCVI…NISL), 395-429 (DRVC…GIAP), 430-464 (DVIN…GKTP), 465-499 (DIVI…GVKP), 500-534 (TYVT…SREN), 537-561 (SMVK…LEFP), 563-598 (PKSV…GVEP), 599-633 (EKSM…KIVP), 634-668 (DLFT…DVKP), 697-731 (DVVY…EIVP), 760-794 (DVFY…GVDP), 795-829 (DAAP…GVKP), and 830-864 (DVVP…GIKP).

Belongs to the PPR family. P subfamily.

The chain is Putative pentatricopeptide repeat-containing protein At1g13800 from Arabidopsis thaliana (Mouse-ear cress).